The primary structure comprises 323 residues: MHSTWQPAATIKQLKQRADILNQIRQFFVERNVMEVDTPAMSHATVTDVHLHTFKTEFVGPGYAHGQPLFFMTSPEFHMKRLLAAGSGCIYQICKSFRNEENGRYHNPEFTMLEWYRVGFDHHDLMDEMDLLLQQVLKSGTAERMTYQQAFIDVLGVCPLEDSMDTLKQAAAKLGLSDIADPEQDRDTLLQLLFSIGVEAKIGQQVPAFVYDFPASQAALAKINPNDSRVADRFEVYFKGIELANGFHELDKPQEQLKRFEDDNTKRIEMGLSPQPIDHHLIEALKAGLPDCAGVALGIDRLIMLALGYDHIDDVTAFPFPRS.

Residue 74 to 76 (SPE) coordinates substrate. Residues 98–100 (RNE) and asparagine 107 contribute to the ATP site. Tyrosine 116 lines the substrate pocket. ATP is bound at residue 242-243 (EL). Glutamate 249 is a substrate binding site. Residue glycine 298 coordinates ATP.

Belongs to the class-II aminoacyl-tRNA synthetase family. EpmA subfamily. As to quaternary structure, homodimer.

It catalyses the reaction D-beta-lysine + L-lysyl-[protein] + ATP = N(6)-((3R)-3,6-diaminohexanoyl)-L-lysyl-[protein] + AMP + diphosphate + H(+). In terms of biological role, with EpmB is involved in the beta-lysylation step of the post-translational modification of translation elongation factor P (EF-P). Catalyzes the ATP-dependent activation of (R)-beta-lysine produced by EpmB, forming a lysyl-adenylate, from which the beta-lysyl moiety is then transferred to the epsilon-amino group of a conserved specific lysine residue in EF-P. In Vibrio atlanticus (strain LGP32) (Vibrio splendidus (strain Mel32)), this protein is Elongation factor P--(R)-beta-lysine ligase.